Here is a 404-residue protein sequence, read N- to C-terminus: Dual-specificity RNA methyltransferase RlmN (404 aa).

Glu-118 acts as the Proton acceptor in catalysis. The 233-residue stretch at 125-357 (VGRAGALCVS…NKAGYSSPIR (233 aa)) folds into the Radical SAM core domain. A disulfide bridge links Cys-132 with Cys-368. Cys-139, Cys-143, and Cys-146 together coordinate [4Fe-4S] cluster. S-adenosyl-L-methionine contacts are provided by residues 194 to 195 (GE), Ser-226, 248 to 250 (SLH), and Asn-325. The S-methylcysteine intermediate role is filled by Cys-368.

This sequence belongs to the radical SAM superfamily. RlmN family. [4Fe-4S] cluster is required as a cofactor.

The protein resides in the cytoplasm. The enzyme catalyses adenosine(2503) in 23S rRNA + 2 reduced [2Fe-2S]-[ferredoxin] + 2 S-adenosyl-L-methionine = 2-methyladenosine(2503) in 23S rRNA + 5'-deoxyadenosine + L-methionine + 2 oxidized [2Fe-2S]-[ferredoxin] + S-adenosyl-L-homocysteine. It catalyses the reaction adenosine(37) in tRNA + 2 reduced [2Fe-2S]-[ferredoxin] + 2 S-adenosyl-L-methionine = 2-methyladenosine(37) in tRNA + 5'-deoxyadenosine + L-methionine + 2 oxidized [2Fe-2S]-[ferredoxin] + S-adenosyl-L-homocysteine. Specifically methylates position 2 of adenine 2503 in 23S rRNA and position 2 of adenine 37 in tRNAs. m2A2503 modification seems to play a crucial role in the proofreading step occurring at the peptidyl transferase center and thus would serve to optimize ribosomal fidelity. This is Dual-specificity RNA methyltransferase RlmN from Caulobacter vibrioides (strain ATCC 19089 / CIP 103742 / CB 15) (Caulobacter crescentus).